A 291-amino-acid polypeptide reads, in one-letter code: Prolyl 4-hydroxylase 5 (291 aa).

The Cytoplasmic portion of the chain corresponds to methionine 1 to glutamine 22. Residues alanine 23 to leucine 43 form a helical; Signal-anchor for type II membrane protein membrane-spanning segment. The Extracellular segment spans residues serine 44–valine 291. Asparagine 51 carries an N-linked (GlcNAc...) asparagine glycan. The 124-residue stretch at asparagine 163–valine 286 folds into the Fe2OG dioxygenase domain. 2 residues coordinate Fe cation: histidine 181 and aspartate 183. Asparagine 222 is a glycosylation site (N-linked (GlcNAc...) asparagine). Histidine 267 is a Fe cation binding site. Residue lysine 277 participates in 2-oxoglutarate binding.

It belongs to the P4HA family. The cofactor is Fe(2+). It depends on L-ascorbate as a cofactor. In terms of tissue distribution, expressed in epidermal root hair cells (trichoblasts).

Its subcellular location is the endoplasmic reticulum membrane. It localises to the golgi apparatus membrane. It carries out the reaction L-prolyl-[collagen] + 2-oxoglutarate + O2 = trans-4-hydroxy-L-prolyl-[collagen] + succinate + CO2. In terms of biological role, catalyzes the post-translational formation of 4-hydroxyproline in -Xaa-Pro-Gly- sequences in proline-rich peptide sequences of plant glycoproteins and other proteins. Hydroxyprolines are important constituent of many plant cell wall glycoproteins such as extensins, hydroxyproline-rich glycoproteins, lectins and arabinogalactan proteins. Possesses high affinity for leucine-rich repeat and proline-rich extensins of root cell walls that are essential for root hair development. Hydroxyprolines define the subsequent O-glycosylation sites by arabinosyltransferases which elongate the O-arabinosides on extensins. In Arabidopsis thaliana (Mouse-ear cress), this protein is Prolyl 4-hydroxylase 5.